The primary structure comprises 262 residues: Acyl-[acyl-carrier-protein]--UDP-N-acetylglucosamine O-acyltransferase (262 aa).

Belongs to the transferase hexapeptide repeat family. LpxA subfamily. Homotrimer.

Its subcellular location is the cytoplasm. The enzyme catalyses a (3R)-hydroxyacyl-[ACP] + UDP-N-acetyl-alpha-D-glucosamine = a UDP-3-O-[(3R)-3-hydroxyacyl]-N-acetyl-alpha-D-glucosamine + holo-[ACP]. It participates in glycolipid biosynthesis; lipid IV(A) biosynthesis; lipid IV(A) from (3R)-3-hydroxytetradecanoyl-[acyl-carrier-protein] and UDP-N-acetyl-alpha-D-glucosamine: step 1/6. In terms of biological role, involved in the biosynthesis of lipid A, a phosphorylated glycolipid that anchors the lipopolysaccharide to the outer membrane of the cell. This chain is Acyl-[acyl-carrier-protein]--UDP-N-acetylglucosamine O-acyltransferase, found in Sodalis glossinidius (strain morsitans).